Here is a 449-residue protein sequence, read N- to C-terminus: Baeyer-Villiger oxidase GME11358 (449 aa).

The protein belongs to the questin oxidase family.

The protein operates within secondary metabolite biosynthesis. Baeyer-Villiger oxidase; part of the gene cluster that mediates the biosynthesis of dibenzodioxocinones such as pestalotiollide B, a novel class of inhibitors against cholesterol ester transfer protein (CEPT). The biosynthesis initiates from condensation of acetate and malonate units catalyzed by the non-reducing PKS pks8/GME11356. Pks8/GME11356 lacks a thioesterase (TE) domain, which is important to the cyclizing of the third ring of atrochrysone carboxylic acid, and the esterase GME11355 might play the role of TE and catalyzes the cyclization reaction of the C ring. The lactamase-like protein GME11357 (or other beta-lactamases in Pestalotiopsis microspora) probably hydrolyzes the thioester bond between the ACP of pks8/GME11356 and the intermediate to release atrochrysone carboxylic acid, which is spontaneously dehydrates to form endocrocin anthrone. Endocrocin anthrone is further converted to emodin via the endocrocin intermediate. Emodin is then oxidized by several enzymes such as the Baeyer-Villiger oxidase GME11358, the oxidoreductase GME11367, the short chain dehydrogenase/reductase GME11373, as well as by other oxidoreductases from the cluster, to modify the A and C rings and open the B ring, and finally yield monodictyphenone. The prenyltransferase GME11375 may catalyze the addition reaction between the C5 side chains and the carbon bone of dibenzodioxocinones. The remaining biochemical reactions to the final product dibenzodioxocinones should be methylation catalyzed by methyltransferase GME11366 and reduction and lactonization reaction catalyzed by a series of oxidordeuctases. This Pestalotiopsis microspora protein is Baeyer-Villiger oxidase GME11358.